A 248-amino-acid chain; its full sequence is Triosephosphate isomerase (248 aa).

Residue Lys-12 coordinates substrate. His-94 serves as the catalytic Electrophile. The active-site Proton acceptor is Glu-165.

This sequence belongs to the triosephosphate isomerase family. Homodimer.

The catalysed reaction is D-glyceraldehyde 3-phosphate = dihydroxyacetone phosphate. It participates in carbohydrate biosynthesis; gluconeogenesis. The protein operates within carbohydrate degradation; glycolysis; D-glyceraldehyde 3-phosphate from glycerone phosphate: step 1/1. The chain is Triosephosphate isomerase (Tpi) from Bombyx mori (Silk moth).